The sequence spans 494 residues: MQKKYVVALDQGTTSSRAIVFDHDANIVSVSQREFTQLYPNPGWVEHDPMEIWASQSSVLVEVLARAGIHSDEVAAIGITNQRETTVIWEKATGKPIYNAIVWQCRRSSEICEQLKAQGLEEYVRENTGLLLDPYFSGTKIKWILDNVPNARAQAERGELLFGTIDTWLVWKLTEGKVHVTDPTNAARTMLFNIHSLTWDNKLLEALDIPLSLLPEVKPSCSVYGTTRIAGEGSEIQVAGMAGDQQAALFGQLCVEPGMAKNTYGTGCFLLMNTGTKAVRSNHGLLTTVAVGPKGEVNYALEGSVFMGGATIQWLRDELGLIRDASDTEYFASKVADTNGVYLVPAFVGLGAPYWDPNARGALFGLTRGANRNHIIRAALESIAYQSKDLLDAMTKDSGVSLKRLKVDGGAVANDFLMQFQADITDVEVLRPSVCETTALGAAFLAGLAVGFWESVIELEHKACIDKHFIPNIDAENRGRLYAGWQDAVARTRA.

Thr13 lines the ADP pocket. Residues Thr13, Thr14, and Ser15 each contribute to the ATP site. Thr13 provides a ligand contact to sn-glycerol 3-phosphate. Residue Arg17 participates in ADP binding. Sn-glycerol 3-phosphate is bound by residues Arg83, Glu84, Tyr135, and Asp244. Arg83, Glu84, Tyr135, Asp244, and Gln245 together coordinate glycerol. Positions 266 and 309 each coordinate ADP. The ATP site is built by Thr266, Gly309, Gln313, and Gly410. The ADP site is built by Gly410 and Asn414.

This sequence belongs to the FGGY kinase family.

It carries out the reaction glycerol + ATP = sn-glycerol 3-phosphate + ADP + H(+). It participates in polyol metabolism; glycerol degradation via glycerol kinase pathway; sn-glycerol 3-phosphate from glycerol: step 1/1. With respect to regulation, inhibited by fructose 1,6-bisphosphate (FBP). Its function is as follows. Key enzyme in the regulation of glycerol uptake and metabolism. Catalyzes the phosphorylation of glycerol to yield sn-glycerol 3-phosphate. In Shewanella baltica (strain OS223), this protein is Glycerol kinase.